Reading from the N-terminus, the 1113-residue chain is uncharacterized protein (1113 aa).

313-320 lines the ATP pocket; that stretch reads GPPGTGKS.

Belongs to the DNA2/NAM7 helicase family.

This is an uncharacterized protein from Mycoplasma genitalium (strain ATCC 33530 / DSM 19775 / NCTC 10195 / G37) (Mycoplasmoides genitalium).